A 556-amino-acid polypeptide reads, in one-letter code: Man(5)GlcNAc(2)-PP-dolichol translocation protein RFT1 (556 aa).

The next 12 membrane-spanning stretches (helical) occupy residues 10 to 30 (LLGAGFSIIFQILCRILTFGI), 41 to 61 (EVLGIMNVRLLLLESTLLFLS), 91 to 111 (LTVPICAVLCAPCLYIWLNWL), 129 to 149 (VAFSCVLELMAESAVFVAQVF), 156 to 176 (ILLNTLHILVRSAIFLWIVTG), 184 to 204 (AFAIAQLSSAVTIVLGQYGFF), 353 to 373 (SVLNNLLLGVSSIGLIAFTFG), 389 to 409 (FVAGGLPQSLLQWHCLAIYLL), 440 to 460 (VSFLVLSYILTGIFGPVGFIF), 461 to 477 (ANCINMLSRILYSTYYI), 489 to 509 (LLGLWPGKLFGCTLFLAGIVC), and 517 to 537 (LATHLGVGVLAGLACLLSWAL).

Belongs to the RFT1 family.

The protein localises to the endoplasmic reticulum membrane. It functions in the pathway protein modification; protein glycosylation. In terms of biological role, intramembrane glycolipid transporter that operates in the biosynthetic pathway of dolichol-linked oligosaccharides, the glycan precursors employed in protein asparagine (N)-glycosylation. The sequential addition of sugars to dolichol pyrophosphate produces dolichol-linked oligosaccharides containing fourteen sugars, including two GlcNAcs, nine mannoses and three glucoses. Once assembled, the oligosaccharide is transferred from the lipid to nascent proteins by oligosaccharyltransferases. The assembly of dolichol-linked oligosaccharides begins on the cytosolic side of the endoplasmic reticulum membrane and finishes in its lumen. RFT1 could mediate the translocation of the cytosolically oriented intermediate DolPP-GlcNAc2Man5, produced by ALG11, into the ER lumen where dolichol-linked oligosaccharides assembly continues. However, the intramembrane lipid transporter activity could not be confirmed in vitro. The protein is Man(5)GlcNAc(2)-PP-dolichol translocation protein RFT1 of Drosophila melanogaster (Fruit fly).